The primary structure comprises 229 residues: Potassium/proton antiporter CemA (229 aa).

Helical transmembrane passes span 7–27 (FTPLLYLASIVFLPWWISLLF), 107–127 (ILHFSTNIICFIILSGYSIFG), and 189–209 (IISGLVSTFPVILDTIFKYWI).

This sequence belongs to the CemA family.

It localises to the plastid. Its subcellular location is the chloroplast inner membrane. The catalysed reaction is K(+)(in) + H(+)(out) = K(+)(out) + H(+)(in). Contributes to K(+)/H(+) antiport activity by supporting proton efflux to control proton extrusion and homeostasis in chloroplasts in a light-dependent manner to modulate photosynthesis. Prevents excessive induction of non-photochemical quenching (NPQ) under continuous-light conditions. Indirectly promotes efficient inorganic carbon uptake into chloroplasts. This chain is Potassium/proton antiporter CemA, found in Guizotia abyssinica (Niger).